Consider the following 321-residue polypeptide: Biotin synthase (321 aa).

The Radical SAM core domain occupies 45 to 271; it reads YYGKKVKLNM…INPTKEIRIA (227 aa). [4Fe-4S] cluster is bound by residues C63, C67, and C70. [2Fe-2S] cluster is bound by residues C106, C139, C199, and R269.

It belongs to the radical SAM superfamily. Biotin synthase family. Homodimer. [4Fe-4S] cluster serves as cofactor. Requires [2Fe-2S] cluster as cofactor.

The enzyme catalyses (4R,5S)-dethiobiotin + (sulfur carrier)-SH + 2 reduced [2Fe-2S]-[ferredoxin] + 2 S-adenosyl-L-methionine = (sulfur carrier)-H + biotin + 2 5'-deoxyadenosine + 2 L-methionine + 2 oxidized [2Fe-2S]-[ferredoxin]. The protein operates within cofactor biosynthesis; biotin biosynthesis; biotin from 7,8-diaminononanoate: step 2/2. Catalyzes the conversion of dethiobiotin (DTB) to biotin by the insertion of a sulfur atom into dethiobiotin via a radical-based mechanism. In Staphylococcus epidermidis (strain ATCC 35984 / DSM 28319 / BCRC 17069 / CCUG 31568 / BM 3577 / RP62A), this protein is Biotin synthase.